A 413-amino-acid polypeptide reads, in one-letter code: Gamma-glutamyl phosphate reductase (413 aa).

Belongs to the gamma-glutamyl phosphate reductase family.

It is found in the cytoplasm. The catalysed reaction is L-glutamate 5-semialdehyde + phosphate + NADP(+) = L-glutamyl 5-phosphate + NADPH + H(+). It functions in the pathway amino-acid biosynthesis; L-proline biosynthesis; L-glutamate 5-semialdehyde from L-glutamate: step 2/2. Catalyzes the NADPH-dependent reduction of L-glutamate 5-phosphate into L-glutamate 5-semialdehyde and phosphate. The product spontaneously undergoes cyclization to form 1-pyrroline-5-carboxylate. The polypeptide is Gamma-glutamyl phosphate reductase (Lactococcus lactis subsp. cremoris (strain SK11)).